Consider the following 613-residue polypeptide: Cilia- and flagella-associated protein 100 (613 aa).

A disordered region spans residues 36–55 (KSKESKKNKGNVTISDRSSN). Residues 45–55 (GNVTISDRSSN) show a composition bias toward polar residues. Coiled-coil stretches lie at residues 167 to 198 (ALAM…FLEK), 233 to 260 (VEIR…KHYK), 396 to 435 (FTKL…DKEV), and 504 to 580 (GTVQ…RGRK).

It belongs to the CFAP100 family.

It localises to the cytoplasm. The protein resides in the cytoskeleton. It is found in the cilium axoneme. In terms of biological role, may play a role in ciliary/flagellar motility by regulating the assembly and the activity of axonemal inner dynein arm. In Mus musculus (Mouse), this protein is Cilia- and flagella-associated protein 100.